The following is a 214-amino-acid chain: MAKKKLNKNWLHDHINDPYVKLAQKEGYRARAVYKLKEIDESEKLIKPGQIIVDLGCTPGSWSQYVRNKLSGSVGGGINGIIIGLDMLEMEPIADVHYIQGDFREQNVLEQLEVVLAGRKVDLVLSDMAPNLSGIAVADAARMMDIIELAIDFAQHHMKPSGSLLVKCFNGSGFNDIVEKFRHEFKTVTQKKPKASRDKSSEIFLLGKTLKNPL.

Glycine 60, tryptophan 62, aspartate 86, aspartate 102, and aspartate 127 together coordinate S-adenosyl-L-methionine. The active-site Proton acceptor is the lysine 167.

It belongs to the class I-like SAM-binding methyltransferase superfamily. RNA methyltransferase RlmE family.

The protein resides in the cytoplasm. It carries out the reaction uridine(2552) in 23S rRNA + S-adenosyl-L-methionine = 2'-O-methyluridine(2552) in 23S rRNA + S-adenosyl-L-homocysteine + H(+). In terms of biological role, specifically methylates the uridine in position 2552 of 23S rRNA at the 2'-O position of the ribose in the fully assembled 50S ribosomal subunit. The polypeptide is Ribosomal RNA large subunit methyltransferase E (Herminiimonas arsenicoxydans).